Consider the following 486-residue polypeptide: Bifunctional protein HldE (486 aa).

A ribokinase region spans residues 1-329; that stretch reads MSSRLSGLLD…AALSVAGPVG (329 aa). 204 to 207 serves as a coordination point for ATP; it reads NAFE. The active site involves Asp-274. The interval 355 to 486 is cytidylyltransferase; the sequence is FTNGCFDILH…AIIARSETGK (132 aa).

In the N-terminal section; belongs to the carbohydrate kinase PfkB family. The protein in the C-terminal section; belongs to the cytidylyltransferase family. In terms of assembly, homodimer.

It carries out the reaction D-glycero-beta-D-manno-heptose 7-phosphate + ATP = D-glycero-beta-D-manno-heptose 1,7-bisphosphate + ADP + H(+). The catalysed reaction is D-glycero-beta-D-manno-heptose 1-phosphate + ATP + H(+) = ADP-D-glycero-beta-D-manno-heptose + diphosphate. It participates in nucleotide-sugar biosynthesis; ADP-L-glycero-beta-D-manno-heptose biosynthesis; ADP-L-glycero-beta-D-manno-heptose from D-glycero-beta-D-manno-heptose 7-phosphate: step 1/4. Its pathway is nucleotide-sugar biosynthesis; ADP-L-glycero-beta-D-manno-heptose biosynthesis; ADP-L-glycero-beta-D-manno-heptose from D-glycero-beta-D-manno-heptose 7-phosphate: step 3/4. In terms of biological role, catalyzes the phosphorylation of D-glycero-D-manno-heptose 7-phosphate at the C-1 position to selectively form D-glycero-beta-D-manno-heptose-1,7-bisphosphate. Functionally, catalyzes the ADP transfer from ATP to D-glycero-beta-D-manno-heptose 1-phosphate, yielding ADP-D-glycero-beta-D-manno-heptose. In Hyphomonas neptunium (strain ATCC 15444), this protein is Bifunctional protein HldE.